The primary structure comprises 228 residues: Cytochrome c oxidase subunit 2 (228 aa).

At 1–14 the chain is on the mitochondrial intermembrane side; that stretch reads MANHSQLGFQDASS. The chain crosses the membrane as a helical span at residues 15–45; that stretch reads PIMEELVEFHDHALIVALAICSLVLYLLAHM. At 46-58 the chain is on the mitochondrial matrix side; sequence LMEKLSSNAVDAQ. The helical transmembrane segment at 59 to 86 threads the bilayer; sequence EVELIWTILPAIVLVLLALPSLQILYMM. Residues 87–228 lie on the Mitochondrial intermembrane side of the membrane; that stretch reads DEIDEPDLTL…EAWSSLLSSS (142 aa). The Cu cation site is built by His-160, Cys-195, Glu-197, Cys-199, His-203, and Met-206. Position 197 (Glu-197) interacts with Mg(2+).

Belongs to the cytochrome c oxidase subunit 2 family. In terms of assembly, component of the cytochrome c oxidase (complex IV, CIV), a multisubunit enzyme composed of 14 subunits. The complex is composed of a catalytic core of 3 subunits MT-CO1, MT-CO2 and MT-CO3, encoded in the mitochondrial DNA, and 11 supernumerary subunits COX4I, COX5A, COX5B, COX6A, COX6B, COX6C, COX7A, COX7B, COX7C, COX8 and NDUFA4, which are encoded in the nuclear genome. The complex exists as a monomer or a dimer and forms supercomplexes (SCs) in the inner mitochondrial membrane with NADH-ubiquinone oxidoreductase (complex I, CI) and ubiquinol-cytochrome c oxidoreductase (cytochrome b-c1 complex, complex III, CIII), resulting in different assemblies (supercomplex SCI(1)III(2)IV(1) and megacomplex MCI(2)III(2)IV(2)). Found in a complex with TMEM177, COA6, COX18, COX20, SCO1 and SCO2. Interacts with TMEM177 in a COX20-dependent manner. Interacts with COX20. Interacts with COX16. Requires Cu cation as cofactor.

It is found in the mitochondrion inner membrane. It catalyses the reaction 4 Fe(II)-[cytochrome c] + O2 + 8 H(+)(in) = 4 Fe(III)-[cytochrome c] + 2 H2O + 4 H(+)(out). Its function is as follows. Component of the cytochrome c oxidase, the last enzyme in the mitochondrial electron transport chain which drives oxidative phosphorylation. The respiratory chain contains 3 multisubunit complexes succinate dehydrogenase (complex II, CII), ubiquinol-cytochrome c oxidoreductase (cytochrome b-c1 complex, complex III, CIII) and cytochrome c oxidase (complex IV, CIV), that cooperate to transfer electrons derived from NADH and succinate to molecular oxygen, creating an electrochemical gradient over the inner membrane that drives transmembrane transport and the ATP synthase. Cytochrome c oxidase is the component of the respiratory chain that catalyzes the reduction of oxygen to water. Electrons originating from reduced cytochrome c in the intermembrane space (IMS) are transferred via the dinuclear copper A center (CU(A)) of subunit 2 and heme A of subunit 1 to the active site in subunit 1, a binuclear center (BNC) formed by heme A3 and copper B (CU(B)). The BNC reduces molecular oxygen to 2 water molecules using 4 electrons from cytochrome c in the IMS and 4 protons from the mitochondrial matrix. This chain is Cytochrome c oxidase subunit 2 (MT-CO2), found in Anas platyrhynchos (Mallard).